A 395-amino-acid chain; its full sequence is Beta-1,4-galactosyltransferase 3 (395 aa).

At M1 to C10 the chain is on the cytoplasmic side. The chain crosses the membrane as a helical; Signal-anchor for type II membrane protein span at residues T11 to F31. The Lumenal portion of the chain corresponds to R32–H395. N57 carries an N-linked (GlcNAc...) asparagine glycan. C79 and C121 are disulfide-bonded. P132–R136 provides a ligand contact to UDP-alpha-D-galactose. The N-linked (GlcNAc...) asparagine glycan is linked to N168. UDP-alpha-D-galactose-binding positions include F171 to R173, V198 to D199, Y228, and W260. C192 and C211 are disulfide-bonded. Residue D199 coordinates Mn(2+). Residue G262 to D265 coordinates N-acetyl-D-glucosamine. H293 is a Mn(2+) binding site. H293–G295 contacts UDP-alpha-D-galactose. Residue R305 coordinates N-acetyl-D-glucosamine. An N-linked (GlcNAc...) asparagine glycan is attached at N339. Residues I340–H395 are disordered. Over residues R352 to S364 the composition is skewed to low complexity. The N-linked (GlcNAc...) asparagine glycan is linked to N387.

Belongs to the glycosyltransferase 7 family. It depends on Mn(2+) as a cofactor.

It localises to the golgi apparatus. The protein localises to the golgi stack membrane. The catalysed reaction is an N-acetyl-beta-D-glucosaminyl derivative + UDP-alpha-D-galactose = a beta-D-galactosyl-(1-&gt;4)-N-acetyl-beta-D-glucosaminyl derivative + UDP + H(+). It catalyses the reaction N-acetyl-D-glucosamine + UDP-alpha-D-galactose = beta-D-galactosyl-(1-&gt;4)-N-acetyl-D-glucosamine + UDP + H(+). It carries out the reaction a beta-D-GlcNAc-(1-&gt;3)-beta-D-Gal-(1-&gt;4)-beta-D-Glc-(1&lt;-&gt;1)-Cer(d18:1(4E)) + UDP-alpha-D-galactose = a neolactoside nLc4Cer(d18:1(4E)) + UDP + H(+). The enzyme catalyses a beta-D-glucosylceramide + UDP-alpha-D-galactose = a beta-D-galactosyl-(1-&gt;4)-beta-D-glucosyl-(1&lt;-&gt;1)-ceramide + UDP + H(+). The catalysed reaction is a neolactoside IV(3)-beta-GlcNAc-nLc4Cer + UDP-alpha-D-galactose = a neolactoside nLc6Cer + UDP + H(+). The protein operates within protein modification; protein glycosylation. Responsible for the synthesis of complex-type N-linked oligosaccharides in many glycoproteins as well as the carbohydrate moieties of glycolipids. In Mus musculus (Mouse), this protein is Beta-1,4-galactosyltransferase 3.